We begin with the raw amino-acid sequence, 207 residues long: A-type ATP synthase subunit E (207 aa).

This sequence belongs to the V-ATPase E subunit family. In terms of assembly, has multiple subunits with at least A(3), B(3), C, D, E, F, H, I and proteolipid K(x).

It is found in the cell membrane. Component of the A-type ATP synthase that produces ATP from ADP in the presence of a proton gradient across the membrane. This is A-type ATP synthase subunit E from Hyperthermus butylicus (strain DSM 5456 / JCM 9403 / PLM1-5).